Here is a 363-residue protein sequence, read N- to C-terminus: MIVESVELKDFRNYEFLDMNFNEHVNIIYGDNAQGKTNILESIYMCSTSKSHRGSKDREIVRFGEDESHIKLNVLKHGMKYRIDMHLKKNKTKGIAVNGIPIKKAVELFGIINIVFFSPEDLNIIKNGPSERRRFMDMELSQLDKIYLSNLVNYNKVLNQRNKLLKDIAFSPSEQLMQTLDIWDMQLVKYGSLIIKGRKSFIEKINTIISDIHSRLTGGIENIKVCYVPDVDVNDFEEEVRNSRQKDIKYKVTGKGPHKDDLIFLINDNDVRKYGSQGQQRTAALSLKLSEIELVKLVIKDTPVLLLDDVLSELDSNRQNFLINSIGDIQTIVTCTGLEEFINNRMNINKIFKVTDGHVVNEN.

An ATP-binding site is contributed by 30–37 (GDNAQGKT).

Belongs to the RecF family.

The protein resides in the cytoplasm. The RecF protein is involved in DNA metabolism; it is required for DNA replication and normal SOS inducibility. RecF binds preferentially to single-stranded, linear DNA. It also seems to bind ATP. This is DNA replication and repair protein RecF from Lachnospira eligens (strain ATCC 27750 / DSM 3376 / VPI C15-48 / C15-B4) (Eubacterium eligens).